Reading from the N-terminus, the 208-residue chain is uncharacterized protein (208 aa).

A J domain is found at 4–71 (DYYAILNITP…SRRAQYDRES (68 aa)). The segment at 67–100 (YDRESASSSAKPRQSFFSRTNPQPQSQSQQGGPS) is disordered. Polar residues predominate over residues 72–87 (ASSSAKPRQSFFSRTN). Over residues 88–100 (PQPQSQSQQGGPS) the composition is skewed to low complexity. Residues 127 to 147 (GIANAFWTIVGTLAGAALGFI) traverse the membrane as a helical segment.

This sequence belongs to the DnaJ family.

The protein resides in the endoplasmic reticulum membrane. This is an uncharacterized protein from Schizosaccharomyces pombe (strain 972 / ATCC 24843) (Fission yeast).